A 472-amino-acid chain; its full sequence is MVCLAFIRAAHEHLYLVRKVSHVCRCHQHRAWGSRPAASQFAVQGAPGRVLELLGKSYPQDDHTNLTQKVLSKVGRNLHNQKFHPLWLIKERVKEHFYQQYMGRSRTPLFSVYDQLSPVVTTWQNFDSLLIPADHPSRKKGDNYYLNRGHMLRAHTSAHQWDLLHAGLNAFLVVGDVYRRDQIDSQHYPVFHQLEGVRLFSKHELFAGVKDGESLQLFEESSRSAHKQETHTMEAVKLVEFDLKQVLTRLVTHLFGDGLEVRWVDCYFPFTHPSFEMEINFRGEWLEVLGCGVMEQQLVNSAGAQDRIGWAFGLGLERLAMVLYDIPDIRLFWSEDERFLKQFRLSDINQSVKFQRWFFQEERATGIQRKMGRQLCPFSKYPAVFNDISFWLPSENYTENDFYDIVRTVGGDLVEKVDLIDKFEHPKTHRTSHCYRITYRHMERTLSQREVSSVHQAVQEAAVQLLGVEGRF.

Residues 157 to 160 (SAHQ), R179, 186 to 188 (QHY), and 193 to 195 (QLE) contribute to the substrate site. K202 is subject to N6-acetyllysine. Residues E287 and F312 each coordinate substrate. The FDX-ACB domain maps to 379–471 (SKYPAVFNDI…AVQLLGVEGR (93 aa)).

The protein belongs to the class-II aminoacyl-tRNA synthetase family. In terms of assembly, monomer. In terms of tissue distribution, mainly expressed in the Purkinje cell of cerebellum.

The protein resides in the mitochondrion matrix. It is found in the mitochondrion. It carries out the reaction tRNA(Phe) + L-phenylalanine + ATP = L-phenylalanyl-tRNA(Phe) + AMP + diphosphate + H(+). In terms of biological role, is responsible for the charging of tRNA(Phe) with phenylalanine in mitochondrial translation. To a lesser extent, also catalyzes direct attachment of m-Tyr (an oxidized version of Phe) to tRNA(Phe), thereby opening the way for delivery of the misacylated tRNA to the ribosome and incorporation of ROS-damaged amino acid into proteins. In Rattus norvegicus (Rat), this protein is Phenylalanine--tRNA ligase, mitochondrial (Fars2).